The following is a 73-amino-acid chain: uncharacterized protein (73 aa).

2 helical membrane passes run 10–30 (ILLA…YVSA) and 42–62 (YSTV…IYLI).

It localises to the cell membrane. This is an uncharacterized protein from Archaeoglobus fulgidus (strain ATCC 49558 / DSM 4304 / JCM 9628 / NBRC 100126 / VC-16).